Reading from the N-terminus, the 458-residue chain is Cysteine--tRNA ligase (458 aa).

Cysteine 29 lines the Zn(2+) pocket. A 'HIGH' region motif is present at residues 31–41; sequence PTVYDNPHIGN. Zn(2+) contacts are provided by cysteine 214, histidine 239, and glutamate 243. The 'KMSKS' region signature appears at 272 to 276; it reads KMSKS. ATP is bound at residue lysine 275.

The protein belongs to the class-I aminoacyl-tRNA synthetase family. As to quaternary structure, monomer. Zn(2+) is required as a cofactor.

The protein resides in the cytoplasm. The enzyme catalyses tRNA(Cys) + L-cysteine + ATP = L-cysteinyl-tRNA(Cys) + AMP + diphosphate. The polypeptide is Cysteine--tRNA ligase (Rickettsia bellii (strain OSU 85-389)).